Here is a 408-residue protein sequence, read N- to C-terminus: MIRYISAMPSPEWEHETPRTLALLGSTGSIGTSALRVVEAHPHRFRVVALAGARNVEKLAAQAARWRPEHLGVLDAAGAAKLRDLLPAGYAPHIHIGPEGYATMATLPEAGTVLSAQVGAAGLRATEAAARHGKVICLANKESLVLAGDIIRRHCAGSGAVILPVDSEHNAIFQALQGHDPASVRRIILTASGGPFRGRSREDLAAVSCRDALAHPNWDMGAKITIDSATLMNKGLEVIEACHLYGVGIDDVGVVVHPQSIVHSLVEYEDGSQIAHLGTPDMRIAIAYCLTWPGVVDAGVPRLDLVKAGSLTFEEPDLHSFPCLELARRAYREGRGMPVVLNAANEVAVSLFLSDRIRFLDIPDIIARALDMHDGTTPHDIEGIEALDEATRRTVYERAGHSNTDGMA.

Residues T27, G28, S29, I30, A53, R54, N55, and N140 each contribute to the NADPH site. K141 is a binding site for 1-deoxy-D-xylulose 5-phosphate. Position 142 (E142) interacts with NADPH. Residue D166 participates in Mn(2+) binding. S167, E168, S192, and H215 together coordinate 1-deoxy-D-xylulose 5-phosphate. A Mn(2+)-binding site is contributed by E168. NADPH is bound at residue G221. S228, N233, K234, and E237 together coordinate 1-deoxy-D-xylulose 5-phosphate. Residue E237 coordinates Mn(2+).

Belongs to the DXR family. The cofactor is Mg(2+). Requires Mn(2+) as cofactor.

The catalysed reaction is 2-C-methyl-D-erythritol 4-phosphate + NADP(+) = 1-deoxy-D-xylulose 5-phosphate + NADPH + H(+). It participates in isoprenoid biosynthesis; isopentenyl diphosphate biosynthesis via DXP pathway; isopentenyl diphosphate from 1-deoxy-D-xylulose 5-phosphate: step 1/6. In terms of biological role, catalyzes the NADPH-dependent rearrangement and reduction of 1-deoxy-D-xylulose-5-phosphate (DXP) to 2-C-methyl-D-erythritol 4-phosphate (MEP). This Nitratidesulfovibrio vulgaris (strain DP4) (Desulfovibrio vulgaris) protein is 1-deoxy-D-xylulose 5-phosphate reductoisomerase.